Reading from the N-terminus, the 263-residue chain is Ycf3-interacting protein 1, chloroplastic (263 aa).

A chloroplast-targeting transit peptide spans 1-71 (MASNMLQLSL…VNKEEDSATY (71 aa)). The chain crosses the membrane as a helical span at residues 238–258 (ALYLVSAFPIIIGISVVLILF).

Belongs to the Y3IP1/CEST family. Interacts with Ycf3.

Its subcellular location is the plastid. The protein localises to the chloroplast thylakoid membrane. In terms of biological role, nuclear genome-encoded factor that participates in photosystem I (PSI) biogenesis. Cooperates with the plastid genome-encoded protein PSI assembly Ycf3 in the assembly of stable PSI units in the thylakoid membrane. In Nicotiana tabacum (Common tobacco), this protein is Ycf3-interacting protein 1, chloroplastic.